The following is a 368-amino-acid chain: F-box only protein 28 (368 aa).

Basic and acidic residues predominate over residues Met1–Glu11. Residues Met1–Gln57 are disordered. A compositionally biased stretch (gly residues) spans Glu12 to Gly21. Positions Leu32–Ala52 are enriched in pro residues. An F-box domain is found at Asn61–Val109. Phosphoserine occurs at positions 235 and 242. At Thr270 the chain carries Phosphothreonine. Residues Met328 to Lys368 form a disordered region. At Ser344 the chain carries Phosphoserine.

In terms of assembly, part of a SCF (SKP1-cullin-F-box) protein ligase complex.

It is found in the chromosome. The protein resides in the centromere. The protein localises to the kinetochore. Functionally, probably recognizes and binds to some phosphorylated proteins and promotes their ubiquitination and degradation. In Bos taurus (Bovine), this protein is F-box only protein 28 (FBXO28).